A 257-amino-acid polypeptide reads, in one-letter code: Hydroxyacylglutathione hydrolase (257 aa).

7 residues coordinate Zn(2+): H54, H56, D58, H59, H109, D129, and H167.

Belongs to the metallo-beta-lactamase superfamily. Glyoxalase II family. As to quaternary structure, monomer. Requires Zn(2+) as cofactor.

It catalyses the reaction an S-(2-hydroxyacyl)glutathione + H2O = a 2-hydroxy carboxylate + glutathione + H(+). It functions in the pathway secondary metabolite metabolism; methylglyoxal degradation; (R)-lactate from methylglyoxal: step 2/2. Functionally, thiolesterase that catalyzes the hydrolysis of S-D-lactoyl-glutathione to form glutathione and D-lactic acid. This chain is Hydroxyacylglutathione hydrolase, found in Marinomonas sp. (strain MWYL1).